Consider the following 355-residue polypeptide: MFLRSVSSITKPFRRIESPKQLARRMAVLPDTYADPVRIAVIGGTGLRELPGFTQVASLNIQTPWGTPSSPITILHHTHKDKTVAVAFLSRHGLHHQIAPHEVPARANIAALRSIGVRTIIAFSAVGSLQEEIKPRDFVVPDQVIDRTKGIRPFTFFEGGVVGHVPFGDPFDESVAKIVRACGHSLEGEGVKLHDRGTLICMEGPQFSTRAESKLYRSWGGSVINMSCLPEAKLAREAEIAYQMICMSTDYDCWHESTEDVTVEMVMGNMKANAVNAKHFVTAVLDELADDRNAELVQAKQYAGSVKFGLSTAQANWSPEARERMNWLFPGYFEIDLYIRYLLLIQRDIDLTSWN.

Phosphate-binding positions include T45, 91-92 (RH), and 124-125 (SA). M226 serves as a coordination point for substrate. Residue S227 coordinates phosphate. 250–252 (DYD) lines the substrate pocket.

Belongs to the PNP/MTAP phosphorylase family. MTAP subfamily. In terms of assembly, homotrimer.

The protein resides in the cytoplasm. The protein localises to the nucleus. It carries out the reaction S-methyl-5'-thioadenosine + phosphate = 5-(methylsulfanyl)-alpha-D-ribose 1-phosphate + adenine. The protein operates within amino-acid biosynthesis; L-methionine biosynthesis via salvage pathway; S-methyl-5-thio-alpha-D-ribose 1-phosphate from S-methyl-5'-thioadenosine (phosphorylase route): step 1/1. Functionally, catalyzes the reversible phosphorylation of S-methyl-5'-thioadenosine (MTA) to adenine and 5-methylthioribose-1-phosphate. Involved in the breakdown of MTA, a major by-product of polyamine biosynthesis. Responsible for the first step in the methionine salvage pathway after MTA has been generated from S-adenosylmethionine. Has broad substrate specificity with 6-aminopurine nucleosides as preferred substrates. This is S-methyl-5'-thioadenosine phosphorylase from Emericella nidulans (strain FGSC A4 / ATCC 38163 / CBS 112.46 / NRRL 194 / M139) (Aspergillus nidulans).